We begin with the raw amino-acid sequence, 466 residues long: Hydroxyproline dehydrogenase (466 aa).

It belongs to the proline oxidase family. FAD is required as a cofactor.

The enzyme catalyses trans-4-hydroxy-L-proline + a quinone = (3R,5S)-1-pyrroline-3-hydroxy-5-carboxylate + a quinol + H(+). The catalysed reaction is L-proline + a quinone = (S)-1-pyrroline-5-carboxylate + a quinol + H(+). It participates in amino-acid degradation; L-proline degradation into L-glutamate; L-glutamate from L-proline: step 1/2. In terms of biological role, dehydrogenase that converts trans-4-L-hydroxyproline to delta-1-pyrroline-3-hydroxy-5-carboxylate (Hyp) using a quinone as the terminal electron acceptor. Can also use proline as a substrate but with a very much lower efficiency. Does not react with other diastereomers of Hyp: trans-4-D-hydroxyproline and cis-4-L-hydroxyproline. In Xenopus laevis (African clawed frog), this protein is Hydroxyproline dehydrogenase (prodh2).